A 112-amino-acid polypeptide reads, in one-letter code: DNA-binding protein Memar_1972 (112 aa).

The segment at 14–35 is disordered; it reads MEQMQRQAMDQQGMEEEAARQQ.

Belongs to the PDCD5 family.

The polypeptide is DNA-binding protein Memar_1972 (Methanoculleus marisnigri (strain ATCC 35101 / DSM 1498 / JR1)).